We begin with the raw amino-acid sequence, 350 residues long: uncharacterized protein (350 aa).

Residues 164 to 327 (NDPLPGYVEV…EKTRIGARVV (164 aa)) form the Integrase catalytic domain.

This is an uncharacterized protein from Sinorhizobium fredii (strain NBRC 101917 / NGR234).